Consider the following 217-residue polypeptide: Kunitz-type trypsin inhibitor-like 2 protein (217 aa).

The first 26 residues, 1–26 (MKPLSPLTLSFLLFVFITTLSLAFSN), serve as a signal peptide directing secretion. Cystine bridges form between cysteine 70-cysteine 115 and cysteine 168-cysteine 175. Asparagine 191 is a glycosylation site (N-linked (GlcNAc...) asparagine).

It belongs to the protease inhibitor I3 (leguminous Kunitz-type inhibitor) family.

It is found in the secreted. In terms of biological role, might act as a protease inhibitor involved in plant defense responses. This is Kunitz-type trypsin inhibitor-like 2 protein (PIP20-2) from Pisum sativum (Garden pea).